The chain runs to 165 residues: Peptidyl-prolyl cis-trans isomerase A (165 aa).

N-acetylmethionine is present on M1. V2 is modified (N-acetylvaline; in Peptidyl-prolyl cis-trans isomerase A, N-terminally processed). Residues F7–Q163 enclose the PPIase cyclophilin-type domain. K28 carries the post-translational modification N6-acetyllysine; alternate. A Glycyl lysine isopeptide (Lys-Gly) (interchain with G-Cter in SUMO2); alternate cross-link involves residue K28. Residue K28 forms a Glycyl lysine isopeptide (Lys-Gly) (interchain with G-Cter in ubiquitin); alternate linkage. N6-acetyllysine is present on residues K44 and K76. A Phosphoserine modification is found at S77. K82 is modified (N6-acetyllysine; alternate). K82 participates in a covalent cross-link: Glycyl lysine isopeptide (Lys-Gly) (interchain with G-Cter in SUMO2); alternate. T93 is modified (phosphothreonine). N108 carries N-linked (GlcNAc...) asparagine glycosylation. Residues K125, K131, and K133 each carry the N6-acetyllysine modification.

Belongs to the cyclophilin-type PPIase family. PPIase A subfamily. As to quaternary structure, interacts with protein phosphatase PPP3CA/calcineurin A. Interacts with isoform 2 of BSG/CD147. Interacts with FOXO1; the interaction promotes FOXO1 dephosphorylation, nuclear accumulation and transcriptional activity. Interacts with integrin ITGA2B:ITGB3; the interaction is ROS and peptidyl-prolyl cis-trans isomerase (PPIase) activity-dependent and is increased in the presence of thrombin. Interacts with MAP3K5. Interacts with TARDBP; the interaction is dependent on the RNA-binding activity of TARDBP and the PPIase activity of PPIA/CYPA and the acetylation of PPIA/CYPA at Lys-125 favors the interaction. Interacts with HNRNPA1, HNRNPA2B1, HNRNPC, RBMX, HNRNPK and HNRNPM. Post-translationally, acetylation at Lys-125 markedly inhibits catalysis of cis to trans isomerization. PPIA acetylation also antagonizes the immunosuppressive effects of cyclosporine by inhibiting the sequential steps of cyclosporine binding and calcineurin inhibition. Acetylation at Lys-125 favors the interaction with TARDBP.

The protein localises to the cytoplasm. Its subcellular location is the secreted. It is found in the nucleus. The catalysed reaction is [protein]-peptidylproline (omega=180) = [protein]-peptidylproline (omega=0). Binds cyclosporin A (CsA). CsA mediates some of its effects via an inhibitory action on PPIase. Its function is as follows. Catalyzes the cis-trans isomerization of proline imidic peptide bonds in oligopeptides. Exerts a strong chemotactic effect on leukocytes partly through activation of one of its membrane receptors BSG/CD147, initiating a signaling cascade that culminates in MAPK/ERK activation. Activates endothelial cells (ECs) in a proinflammatory manner by stimulating activation of NF-kappa-B and ERK, JNK and p38 MAP-kinases and by inducing expression of adhesion molecules including SELE and VCAM1. Induces apoptosis in ECs by promoting the FOXO1-dependent expression of CCL2 and BCL2L11 which are involved in EC chemotaxis and apoptosis. In response to oxidative stress, initiates proapoptotic and antiapoptotic signaling in ECs via activation of NF-kappa-B and AKT1 and up-regulation of antiapoptotic protein BCL2. Negatively regulates MAP3K5/ASK1 kinase activity, autophosphorylation and oxidative stress-induced apoptosis mediated by MAP3K5/ASK1. Necessary for the assembly of TARDBP in heterogeneous nuclear ribonucleoprotein (hnRNP) complexes and regulates TARDBP binding to RNA UG repeats and TARDBP-dependent expression of HDAC6, ATG7 and VCP which are involved in clearance of protein aggregates. Plays an important role in platelet activation and aggregation. Regulates calcium mobilization and integrin ITGA2B:ITGB3 bidirectional signaling via increased ROS production as well as by facilitating the interaction between integrin and the cell cytoskeleton. Binds heparan sulfate glycosaminoglycans. The polypeptide is Peptidyl-prolyl cis-trans isomerase A (PPIA) (Symphalangus syndactylus (Siamang)).